We begin with the raw amino-acid sequence, 537 residues long: Probable alpha-galactosidase A (537 aa).

The signal sequence occupies residues 1-23; it reads MNQGTKSILLAATLAAIPWQVYG. The cysteines at positions 46 and 78 are disulfide-linked. N-linked (GlcNAc...) asparagine glycans are attached at residues asparagine 49, asparagine 87, asparagine 93, and asparagine 123. Cysteine 126 and cysteine 156 form a disulfide bridge. The active-site Nucleophile is the aspartate 154. N-linked (GlcNAc...) asparagine glycosylation occurs at asparagine 203. Aspartate 212 (proton donor) is an active-site residue. 2 N-linked (GlcNAc...) asparagine glycosylation sites follow: asparagine 355 and asparagine 436. One can recognise a Ricin B-type lectin domain in the interval 413–537; the sequence is CSSVVPTGLV…FGLPSGVQLS (125 aa). Cystine bridges form between cysteine 430–cysteine 444 and cysteine 469–cysteine 482. Asparagine 491 carries an N-linked (GlcNAc...) asparagine glycan.

It belongs to the glycosyl hydrolase 27 family.

The protein localises to the secreted. The enzyme catalyses Hydrolysis of terminal, non-reducing alpha-D-galactose residues in alpha-D-galactosides, including galactose oligosaccharides, galactomannans and galactolipids.. In terms of biological role, hydrolyzes a variety of simple alpha-D-galactoside as well as more complex molecules such as oligosaccharides and polysaccharides. The polypeptide is Probable alpha-galactosidase A (aglA) (Aspergillus niger (strain ATCC MYA-4892 / CBS 513.88 / FGSC A1513)).